Here is a 171-residue protein sequence, read N- to C-terminus: CS1 fimbrial subunit A (171 aa).

Positions 1-23 (MKLKKTIGAMALATLFATMGASA) are cleaved as a signal peptide.

Belongs to the fimbrial CS1 protein family.

The protein localises to the fimbrium. Its function is as follows. Fimbriae (also called pili), polar filaments radiating from the surface of the bacterium to a length of 0.5-1.5 micrometers and numbering 100-300 per cell, enable bacteria to colonize the epithelium of specific host organs. The protein is CS1 fimbrial subunit A (csoA) of Escherichia coli.